We begin with the raw amino-acid sequence, 554 residues long: Glucose-6-phosphate isomerase (554 aa).

The active-site Proton donor is the glutamate 359. Catalysis depends on residues histidine 390 and lysine 518.

It belongs to the GPI family.

The protein localises to the cytoplasm. It catalyses the reaction alpha-D-glucose 6-phosphate = beta-D-fructose 6-phosphate. The protein operates within carbohydrate biosynthesis; gluconeogenesis. Its pathway is carbohydrate degradation; glycolysis; D-glyceraldehyde 3-phosphate and glycerone phosphate from D-glucose: step 2/4. In terms of biological role, catalyzes the reversible isomerization of glucose-6-phosphate to fructose-6-phosphate. The sequence is that of Glucose-6-phosphate isomerase from Ectopseudomonas mendocina (strain ymp) (Pseudomonas mendocina).